We begin with the raw amino-acid sequence, 298 residues long: uncharacterized protein (298 aa).

Residues 1-61 (MDIFISKKMR…TRKDNNISLN (61 aa)) enclose the HTH lysR-type domain. A DNA-binding region (H-T-H motif) is located at residues 21–40 (IARAAEKIHMTASPFGKSIA).

Belongs to the LysR transcriptional regulatory family.

This is an uncharacterized protein from Escherichia coli (strain K12).